Consider the following 330-residue polypeptide: Dimethyladenosine transferase 1, mitochondrial (330 aa).

The transit peptide at 1-84 (MAQPSARVLQ…RSILRRHPQR (84 aa)) directs the protein to the mitochondrion. S-adenosyl-L-methionine-binding positions include 38–41 (QNFL), Asn-39, Leu-41, Gly-67, Glu-89, Asp-118, and Asn-140.

It belongs to the class I-like SAM-binding methyltransferase superfamily. rRNA adenine N(6)-methyltransferase family. KsgA subfamily.

Its subcellular location is the mitochondrion. Probable S-adenosyl-L-methionine-dependent methyltransferase which specifically dimethylates mitochondrial 12S rRNA at the conserved stem loop. In contrast to mtTFB2, it does not have a critical role in either transcription or regulation of the copy number of mitochondrial DNA. The protein is Dimethyladenosine transferase 1, mitochondrial (mtTFB1) of Drosophila melanogaster (Fruit fly).